Here is a 365-residue protein sequence, read N- to C-terminus: Dual-specificity RNA methyltransferase RlmN (365 aa).

Glutamate 91 acts as the Proton acceptor in catalysis. The 241-residue stretch at 97 to 337 folds into the Radical SAM core domain; it reads ETSRGTLCIS…TTVRKTRGDD (241 aa). Cysteines 104 and 342 form a disulfide. Residues cysteine 111, cysteine 115, and cysteine 118 each coordinate [4Fe-4S] cluster. S-adenosyl-L-methionine is bound by residues 168-169, serine 200, 222-224, and asparagine 299; these read GE and SLH. Cysteine 342 serves as the catalytic S-methylcysteine intermediate.

The protein belongs to the radical SAM superfamily. RlmN family. Requires [4Fe-4S] cluster as cofactor.

It is found in the cytoplasm. The catalysed reaction is adenosine(2503) in 23S rRNA + 2 reduced [2Fe-2S]-[ferredoxin] + 2 S-adenosyl-L-methionine = 2-methyladenosine(2503) in 23S rRNA + 5'-deoxyadenosine + L-methionine + 2 oxidized [2Fe-2S]-[ferredoxin] + S-adenosyl-L-homocysteine. The enzyme catalyses adenosine(37) in tRNA + 2 reduced [2Fe-2S]-[ferredoxin] + 2 S-adenosyl-L-methionine = 2-methyladenosine(37) in tRNA + 5'-deoxyadenosine + L-methionine + 2 oxidized [2Fe-2S]-[ferredoxin] + S-adenosyl-L-homocysteine. Specifically methylates position 2 of adenine 2503 in 23S rRNA and position 2 of adenine 37 in tRNAs. m2A2503 modification seems to play a crucial role in the proofreading step occurring at the peptidyl transferase center and thus would serve to optimize ribosomal fidelity. This chain is Dual-specificity RNA methyltransferase RlmN, found in Nitrosospira multiformis (strain ATCC 25196 / NCIMB 11849 / C 71).